Consider the following 445-residue polypeptide: N-succinylarginine dihydrolase (445 aa).

Residues 19-28 (AGLSFGNVAS), N110, and 137-138 (HR) contribute to the substrate site. E174 is an active-site residue. A substrate-binding site is contributed by R214. H250 is an active-site residue. The substrate site is built by D252 and N363. C369 acts as the Nucleophile in catalysis.

The protein belongs to the succinylarginine dihydrolase family. As to quaternary structure, homodimer.

The enzyme catalyses N(2)-succinyl-L-arginine + 2 H2O + 2 H(+) = N(2)-succinyl-L-ornithine + 2 NH4(+) + CO2. Its pathway is amino-acid degradation; L-arginine degradation via AST pathway; L-glutamate and succinate from L-arginine: step 2/5. In terms of biological role, catalyzes the hydrolysis of N(2)-succinylarginine into N(2)-succinylornithine, ammonia and CO(2). This is N-succinylarginine dihydrolase from Shewanella halifaxensis (strain HAW-EB4).